The following is a 260-amino-acid chain: MEQTLKGDETGWWVVSDAVQIWLPQGELPCGTATKWSLQGKTARQIGEWQEQPVWLVCQGRDTDMASVRQLLDQDVGLFQLAGRGVQLAEFYRSHRFCGYCGHEMVRSKTELACLCHHCKERYYPQIAPCIIVAIRRGEEILLAQHNRHRGNMYTVLAGFVEVGETLEQTVVREVMEESQVQIKNLRYVSSQPWPFPHSLMMAFMAEYAGGEIKHDPKELRDAGWFRYDQLPQLPPPGTVARRLIEDTVVLCRAYHENEG.

Arg-69 provides a ligand contact to substrate. Zn(2+)-binding residues include Cys-98 and Cys-101. Glu-111 is a substrate binding site. Zn(2+) contacts are provided by Cys-116 and Cys-119. Position 124 (Tyr-124) interacts with substrate. One can recognise a Nudix hydrolase domain in the interval 125 to 248 (PQIAPCIIVA…TVARRLIEDT (124 aa)). A divalent metal cation contacts are provided by Ala-158, Glu-174, and Glu-178. The short motif at 159–180 (GFVEVGETLEQTVVREVMEESQ) is the Nudix box element. A substrate-binding site is contributed by 192-199 (QPWPFPHS). Glu-219 contacts a divalent metal cation. Residue Ala-241 participates in substrate binding.

It belongs to the Nudix hydrolase family. NudC subfamily. As to quaternary structure, homodimer. Mg(2+) serves as cofactor. The cofactor is Mn(2+). It depends on Zn(2+) as a cofactor.

The enzyme catalyses a 5'-end NAD(+)-phospho-ribonucleoside in mRNA + H2O = a 5'-end phospho-adenosine-phospho-ribonucleoside in mRNA + beta-nicotinamide D-ribonucleotide + 2 H(+). It catalyses the reaction NAD(+) + H2O = beta-nicotinamide D-ribonucleotide + AMP + 2 H(+). It carries out the reaction NADH + H2O = reduced beta-nicotinamide D-ribonucleotide + AMP + 2 H(+). In terms of biological role, mRNA decapping enzyme that specifically removes the nicotinamide adenine dinucleotide (NAD) cap from a subset of mRNAs by hydrolyzing the diphosphate linkage to produce nicotinamide mononucleotide (NMN) and 5' monophosphate mRNA. The NAD-cap is present at the 5'-end of some mRNAs and stabilizes RNA against 5'-processing. Has preference for mRNAs with a 5'-end purine. Catalyzes the hydrolysis of a broad range of dinucleotide pyrophosphates. This is NAD-capped RNA hydrolase NudC from Pectobacterium carotovorum subsp. carotovorum (strain PC1).